A 196-amino-acid chain; its full sequence is Large ribosomal subunit protein bL17 (196 aa).

A disordered region spans residues 133–196 (AAKRDADKKE…KPAAEEKDAK (64 aa)). Residues 134–143 (AKRDADKKEA) are compositionally biased toward basic and acidic residues. Residues 152–164 (EVAETEAAPEAEA) show a composition bias toward acidic residues. Over residues 184–196 (AAEKPAAEEKDAK) the composition is skewed to basic and acidic residues.

The protein belongs to the bacterial ribosomal protein bL17 family. Part of the 50S ribosomal subunit. Contacts protein L32.

The polypeptide is Large ribosomal subunit protein bL17 (Arthrobacter sp. (strain FB24)).